A 604-amino-acid chain; its full sequence is Afamin (604 aa).

The first 21 residues, 1–21 (MKQLKLTGFVIFFFFLTESLT), serve as a signal peptide directing secretion. Albumin domains lie at 22 to 210 (LPTQ…EPFI), 211 to 403 (YYLK…RFNE), and 404 to 598 (TTEK…PKLA). Cystine bridges form between cysteine 77-cysteine 86, cysteine 99-cysteine 114, cysteine 113-cysteine 124, cysteine 148-cysteine 193, cysteine 192-cysteine 201, cysteine 224-cysteine 270, cysteine 269-cysteine 277, cysteine 289-cysteine 303, cysteine 302-cysteine 313, cysteine 340-cysteine 385, cysteine 384-cysteine 393, cysteine 416-cysteine 462, cysteine 461-cysteine 470, cysteine 483-cysteine 499, cysteine 498-cysteine 509, cysteine 536-cysteine 581, and cysteine 580-cysteine 589. Asparagine 109 carries an N-linked (GlcNAc...) asparagine glycan. A binding pocket for hydrophobic ligands region spans residues 215–319 (ALSSYQKNAC…RGECIIYSNK (105 aa)). A glycan (N-linked (GlcNAc...) asparagine) is linked at asparagine 434.

This sequence belongs to the ALB/AFP/VDB family. Forms a 1:1 complex with Wnt family members; interacts with WNT3A and WNT5A. Interacts with WNT1, WNT2B, WNT3, WNT7A, WNT7B, WNT8, WNT9A, WNT9B, WNT10A and WNT10B. Post-translationally, N-glycosylated; more than 90% of the glycans are sialylated.

It is found in the secreted. In terms of biological role, functions as a carrier for hydrophobic molecules in body fluids. Essential for the solubility and activity of lipidated Wnt family members, including WNT1, WNT2B, WNT3, WNT3A, WNT5A, WNT7A, WNT7B, WNT8, WNT9A, WNT9B, WNT10A and WNT10B. Binds vitamin E. May transport vitamin E in body fluids under conditions where the lipoprotein system is not sufficient. May be involved in the transport of vitamin E across the blood-brain barrier. The chain is Afamin (AFM) from Bos taurus (Bovine).